A 352-amino-acid polypeptide reads, in one-letter code: MKKVCIVGASGFTGGELLRILLQHRGVEIVCATSRRFKGEYVYRVHPNLRGFTQLKFVEPSIDVALKADVVFLALPHGESVKWVPKLYESGVAVFDLSADFRLKDPNAYVEWYKWPQPHPYPDLLQKAVYGQPELHRDELVGAKLVAVPGCMATASILMLAPLAKFGLLSDTPPVVDAKIGSSGAGAEGSVVDLHSFRTYVVRPYEPVHHRHIAEIEQELTRLAGRKVRIAFTPHAVDIVRGIFTTGHVYVEKLPSETDMWRYYRALYGDSKFIRIVKDRLGISRYPNVKYVLGTNIVDLGFELDPRLNRVVTFAAIDNLVRGAAGQAVQAFNIAMGFPEDEGLRQIPIAPL.

Residues 10-13 (SGFT) and 34-36 (SRR) contribute to the NADP(+) site. Residue cysteine 151 is part of the active site. Asparagine 319 contacts NADP(+).

This sequence belongs to the NAGSA dehydrogenase family. Type 1 subfamily. LysY sub-subfamily.

The protein localises to the cytoplasm. The catalysed reaction is [amino-group carrier protein]-C-terminal-N-(1-carboxy-5-oxopentan-1-yl)-L-glutamine + phosphate + NADP(+) = [amino-group carrier protein]-C-terminal-N-(1-carboxy-5-phosphooxy-5-oxopentan-1-yl)-L-glutamine + NADPH + H(+). The enzyme catalyses [amino-group carrier protein]-C-terminal-gamma-(L-glutamyl-5-semialdehyde)-L-glutamate + phosphate + NADP(+) = [amino-group carrier protein]-C-terminal-gamma-(5-phospho-L-glutamyl)-L-glutamate + NADPH + H(+). The protein operates within amino-acid biosynthesis; L-lysine biosynthesis via AAA pathway; L-lysine from L-alpha-aminoadipate (Thermus route): step 3/5. It functions in the pathway amino-acid biosynthesis; L-arginine biosynthesis. Its function is as follows. Involved in both the arginine and lysine biosynthetic pathways. The chain is Putative [LysW]-L-2-aminoadipate/[LysW]-L-glutamate phosphate reductase from Pyrobaculum islandicum (strain DSM 4184 / JCM 9189 / GEO3).